We begin with the raw amino-acid sequence, 146 residues long: Hemoglobin subunit delta (146 aa).

Positions 2-146 (HLTGEEKSAV…VATALAHKYH (145 aa)) constitute a Globin domain. Phosphoserine is present on S50. Heme b is bound by residues H63 and H92.

It belongs to the globin family. As to quaternary structure, heterotetramer of two delta chains and two alpha chains. As to expression, red blood cells.

This is Hemoglobin subunit delta (HBD) from Leontocebus nigricollis (Black-mantled tamarin).